A 405-amino-acid polypeptide reads, in one-letter code: Chorismate synthase (405 aa).

NADP(+)-binding residues include Arg43 and Arg49. FMN is bound by residues 138-140 and 259-260; these read RAS and QA. Basic and acidic residues predominate over residues 275 to 286; it reads RRGSQAHDEMRP. The disordered stretch occupies residues 275-308; it reads RRGSQAHDEMRPGPDGVLRSTNRAGGLEGGMTNG. FMN contacts are provided by residues Gly303, 318–322, and Arg344; that span reads KPIST.

Belongs to the chorismate synthase family. In terms of assembly, homotetramer. FMNH2 serves as cofactor.

The enzyme catalyses 5-O-(1-carboxyvinyl)-3-phosphoshikimate = chorismate + phosphate. Its pathway is metabolic intermediate biosynthesis; chorismate biosynthesis; chorismate from D-erythrose 4-phosphate and phosphoenolpyruvate: step 7/7. Catalyzes the anti-1,4-elimination of the C-3 phosphate and the C-6 proR hydrogen from 5-enolpyruvylshikimate-3-phosphate (EPSP) to yield chorismate, which is the branch point compound that serves as the starting substrate for the three terminal pathways of aromatic amino acid biosynthesis. This reaction introduces a second double bond into the aromatic ring system. In Nocardia farcinica (strain IFM 10152), this protein is Chorismate synthase.